The sequence spans 389 residues: Phosphopentomutase (389 aa).

6 residues coordinate Mn(2+): Asp12, Asp284, His289, Asp325, His326, and His337.

This sequence belongs to the phosphopentomutase family. The cofactor is Mn(2+).

Its subcellular location is the cytoplasm. It catalyses the reaction 2-deoxy-alpha-D-ribose 1-phosphate = 2-deoxy-D-ribose 5-phosphate. The catalysed reaction is alpha-D-ribose 1-phosphate = D-ribose 5-phosphate. It functions in the pathway carbohydrate degradation; 2-deoxy-D-ribose 1-phosphate degradation; D-glyceraldehyde 3-phosphate and acetaldehyde from 2-deoxy-alpha-D-ribose 1-phosphate: step 1/2. In terms of biological role, isomerase that catalyzes the conversion of deoxy-ribose 1-phosphate (dRib-1-P) and ribose 1-phosphate (Rib-1-P) to deoxy-ribose 5-phosphate (dRib-5-P) and ribose 5-phosphate (Rib-5-P), respectively. This is Phosphopentomutase from Anaeromyxobacter sp. (strain Fw109-5).